A 153-amino-acid chain; its full sequence is Interleukin-4 (153 aa).

The first 24 residues, 1 to 24 (MGLTSQLLPPLFFLLACAGNFAHG), serve as a signal peptide directing secretion. Cystine bridges form between Cys-27–Cys-151, Cys-48–Cys-89, and Cys-70–Cys-123. N-linked (GlcNAc...) asparagine glycosylation is present at Asn-62.

It belongs to the IL-4/IL-13 family.

It localises to the secreted. Its function is as follows. Participates in at least several B-cell activation processes as well as of other cell types. It is a costimulator of DNA-synthesis. It induces the expression of class II MHC molecules on resting B-cells. It enhances both secretion and cell surface expression of IgE and IgG1. It also regulates the expression of the low affinity Fc receptor for IgE (CD23) on both lymphocytes and monocytes. Positively regulates IL31RA expression in macrophages. Stimulates autophagy in dendritic cells by interfering with mTORC1 signaling and through the induction of RUFY4. The sequence is that of Interleukin-4 (IL4) from Cercocebus atys (Sooty mangabey).